Reading from the N-terminus, the 142-residue chain is Large ribosomal subunit protein uL13 (142 aa).

It belongs to the universal ribosomal protein uL13 family. In terms of assembly, part of the 50S ribosomal subunit.

Its function is as follows. This protein is one of the early assembly proteins of the 50S ribosomal subunit, although it is not seen to bind rRNA by itself. It is important during the early stages of 50S assembly. This is Large ribosomal subunit protein uL13 from Xanthomonas campestris pv. campestris (strain ATCC 33913 / DSM 3586 / NCPPB 528 / LMG 568 / P 25).